Here is a 94-residue protein sequence, read N- to C-terminus: Integration host factor subunit beta (94 aa).

It belongs to the bacterial histone-like protein family. Heterodimer of an alpha and a beta chain.

In terms of biological role, this protein is one of the two subunits of integration host factor, a specific DNA-binding protein that functions in genetic recombination as well as in transcriptional and translational control. This Ruegeria pomeroyi (strain ATCC 700808 / DSM 15171 / DSS-3) (Silicibacter pomeroyi) protein is Integration host factor subunit beta.